Here is a 655-residue protein sequence, read N- to C-terminus: Putative esterase (655 aa).

A helical membrane pass occupies residues 9–29 (VLSLTLIYISISIGFSVYFYV). Asparagine 71, asparagine 89, asparagine 101, asparagine 185, asparagine 386, asparagine 449, and asparagine 512 each carry an N-linked (GlcNAc...) asparagine; by host glycan. Histidine 515 serves as the catalytic Charge relay system. N-linked (GlcNAc...) asparagine; by host glycosylation is found at asparagine 527 and asparagine 597.

It belongs to the type-B carboxylesterase/lipase family.

It is found in the membrane. The enzyme catalyses a carboxylic ester + H2O = an alcohol + a carboxylate + H(+). This Noctuidae (owlet moths) protein is Putative esterase.